The chain runs to 1059 residues: Putative ATP-dependent RNA helicase BoYb (1059 aa).

A Q motif motif is present at residues 54–82 (RRFAEVSLLPDILETMRNLGLNRLLRLQS). Residues 87–284 (HLAGGSGHGA…RAVNDKPALV (198 aa)) enclose the Helicase ATP-binding domain. Residue 100-107 (GSPASGRT) coordinates ATP. The DEAD box signature appears at 230 to 233 (DDVD). The region spanning 575 to 639 (PPVAGAICMY…GKLFECPEAL (65 aa)) is the Tudor domain. Positions 756-787 (VQDSKEKANSKPHEKMKGKMTDQPAKLQSQPP) are disordered. A compositionally biased stretch (basic and acidic residues) spans 757–775 (QDSKEKANSKPHEKMKGKM).

The protein resides in the cytoplasm. It carries out the reaction ATP + H2O = ADP + phosphate + H(+). Its function is as follows. Involved in primary piRNA biogenesis in germline cells. The polypeptide is Putative ATP-dependent RNA helicase BoYb (BoYb) (Drosophila melanogaster (Fruit fly)).